The sequence spans 263 residues: 3-methyl-2-oxobutanoate hydroxymethyltransferase (263 aa).

Positions 43 and 82 each coordinate Mg(2+). 3-methyl-2-oxobutanoate is bound by residues Asp-43–Ser-44, Asp-82, and Lys-111. Residue Glu-113 participates in Mg(2+) binding. Glu-179 functions as the Proton acceptor in the catalytic mechanism.

Belongs to the PanB family. As to quaternary structure, homodecamer; pentamer of dimers. Mg(2+) is required as a cofactor.

Its subcellular location is the cytoplasm. The enzyme catalyses 3-methyl-2-oxobutanoate + (6R)-5,10-methylene-5,6,7,8-tetrahydrofolate + H2O = 2-dehydropantoate + (6S)-5,6,7,8-tetrahydrofolate. The protein operates within cofactor biosynthesis; (R)-pantothenate biosynthesis; (R)-pantoate from 3-methyl-2-oxobutanoate: step 1/2. In terms of biological role, catalyzes the reversible reaction in which hydroxymethyl group from 5,10-methylenetetrahydrofolate is transferred onto alpha-ketoisovalerate to form ketopantoate. This is 3-methyl-2-oxobutanoate hydroxymethyltransferase from Neisseria gonorrhoeae (strain ATCC 700825 / FA 1090).